A 404-amino-acid chain; its full sequence is Cysteine desulfurase IscS (404 aa).

Pyridoxal 5'-phosphate is bound by residues 75–76 (AT), Asn-155, Gln-183, and 203–205 (SGH). Position 206 is an N6-(pyridoxal phosphate)lysine (Lys-206). Thr-243 contacts pyridoxal 5'-phosphate. Residue Cys-328 is the Cysteine persulfide intermediate of the active site. Cys-328 lines the [2Fe-2S] cluster pocket.

The protein belongs to the class-V pyridoxal-phosphate-dependent aminotransferase family. NifS/IscS subfamily. As to quaternary structure, homodimer. Forms a heterotetramer with IscU, interacts with other sulfur acceptors. Requires pyridoxal 5'-phosphate as cofactor.

The protein localises to the cytoplasm. The enzyme catalyses (sulfur carrier)-H + L-cysteine = (sulfur carrier)-SH + L-alanine. The protein operates within cofactor biosynthesis; iron-sulfur cluster biosynthesis. Functionally, master enzyme that delivers sulfur to a number of partners involved in Fe-S cluster assembly, tRNA modification or cofactor biosynthesis. Catalyzes the removal of elemental sulfur atoms from cysteine to produce alanine. Functions as a sulfur delivery protein for Fe-S cluster synthesis onto IscU, an Fe-S scaffold assembly protein, as well as other S acceptor proteins. The polypeptide is Cysteine desulfurase IscS (Shewanella pealeana (strain ATCC 700345 / ANG-SQ1)).